The chain runs to 495 residues: Thioredoxin reductase SEP1 (495 aa).

FAD is bound at residue 37-54 (DFVKPSPPGTTWGLGGTC). A disulfide bond links Cys54 and Cys59. His468 acts as the Proton acceptor in catalysis. Residues 493 to 494 (CU) constitute a cross-link (cysteinyl-selenocysteine (Cys-Sec)). Residue Sec494 is a non-standard amino acid, selenocysteine.

Belongs to the class-I pyridine nucleotide-disulfide oxidoreductase family. Homodimer. FAD is required as a cofactor. In terms of processing, the N-terminus is blocked.

The catalysed reaction is [thioredoxin]-dithiol + NADP(+) = [thioredoxin]-disulfide + NADPH + H(+). Activity was very low in selenium-depleted cells, but increased 4-fold to the same level as in selenium-sufficient cells for 70 hours after the addition of 10 nm selenite. This is Thioredoxin reductase SEP1 (SEP1) from Emiliania huxleyi (Coccolithophore).